The chain runs to 257 residues: Imidazole glycerol phosphate synthase subunit HisF (257 aa).

Residues aspartate 11 and aspartate 130 contribute to the active site.

This sequence belongs to the HisA/HisF family. Heterodimer of HisH and HisF.

It is found in the cytoplasm. It catalyses the reaction 5-[(5-phospho-1-deoxy-D-ribulos-1-ylimino)methylamino]-1-(5-phospho-beta-D-ribosyl)imidazole-4-carboxamide + L-glutamine = D-erythro-1-(imidazol-4-yl)glycerol 3-phosphate + 5-amino-1-(5-phospho-beta-D-ribosyl)imidazole-4-carboxamide + L-glutamate + H(+). The protein operates within amino-acid biosynthesis; L-histidine biosynthesis; L-histidine from 5-phospho-alpha-D-ribose 1-diphosphate: step 5/9. IGPS catalyzes the conversion of PRFAR and glutamine to IGP, AICAR and glutamate. The HisF subunit catalyzes the cyclization activity that produces IGP and AICAR from PRFAR using the ammonia provided by the HisH subunit. The chain is Imidazole glycerol phosphate synthase subunit HisF from Shewanella sp. (strain MR-4).